We begin with the raw amino-acid sequence, 89 residues long: Alpha-ketoglutarate dehydrogenase subunit 4, mitochondrial (89 aa).

The protein belongs to the alpha-ketoglutarate dehydrogenase component 4 family. Component of the 2-oxoglutarate dehydrogenase complex (OGDC), also called alpha-ketoglutarate dehydrogenase (KGDH) complex. The copmplex is composed of the catalytic subunits OGDH (2-oxoglutarate dehydrogenase kgd1; also called E1 subunit), DLST (dihydrolipoamide succinyltransferase kgd2; also called E2 subunit) and DLD (dihydrolipoamide dehydrogenase dld1; also called E3 subunit), and the assembly factor KGD4. Within OGDC, interacts (via N-terminus) with E3 subunit and (via C-terminus) with the complex core formed by E1 and E2 subunits.

Its subcellular location is the mitochondrion. Functionally, molecular adapter that is necessary to a form a stable 2-oxoglutarate dehydrogenase enzyme complex (OGDC). Required for incorporation of the E3 subunit (dld1) into the E1-E2 core (kgd1-kgd2) of mitochondrial OGDC, and acting as a stability factor for the fully assembled complex. The chain is Alpha-ketoglutarate dehydrogenase subunit 4, mitochondrial (kgd4) from Schizosaccharomyces pombe (strain 972 / ATCC 24843) (Fission yeast).